The sequence spans 202 residues: GTP cyclohydrolase 1 (202 aa).

Residues C90, H93, and C163 each coordinate Zn(2+).

The protein belongs to the GTP cyclohydrolase I family. As to quaternary structure, homomer.

The catalysed reaction is GTP + H2O = 7,8-dihydroneopterin 3'-triphosphate + formate + H(+). The protein operates within cofactor biosynthesis; 7,8-dihydroneopterin triphosphate biosynthesis; 7,8-dihydroneopterin triphosphate from GTP: step 1/1. The sequence is that of GTP cyclohydrolase 1 from Mycobacterium marinum (strain ATCC BAA-535 / M).